We begin with the raw amino-acid sequence, 316 residues long: Porphobilinogen deaminase (316 aa).

C249 bears the S-(dipyrrolylmethanemethyl)cysteine mark.

It belongs to the HMBS family. Monomer. Requires dipyrromethane as cofactor.

The catalysed reaction is 4 porphobilinogen + H2O = hydroxymethylbilane + 4 NH4(+). The protein operates within porphyrin-containing compound metabolism; protoporphyrin-IX biosynthesis; coproporphyrinogen-III from 5-aminolevulinate: step 2/4. Its function is as follows. Tetrapolymerization of the monopyrrole PBG into the hydroxymethylbilane pre-uroporphyrinogen in several discrete steps. The polypeptide is Porphobilinogen deaminase (Nitrobacter winogradskyi (strain ATCC 25391 / DSM 10237 / CIP 104748 / NCIMB 11846 / Nb-255)).